The sequence spans 374 residues: Probable aminopeptidase YDR415C (374 aa).

The signal sequence occupies residues 1–18 (MRIQSLFVLFNVAIIAWS). Positions 177, 196, 235, 262, and 340 each coordinate Zn(2+).

Belongs to the peptidase M28 family. M28E subfamily. Requires Zn(2+) as cofactor.

This is Probable aminopeptidase YDR415C from Saccharomyces cerevisiae (strain ATCC 204508 / S288c) (Baker's yeast).